Reading from the N-terminus, the 390-residue chain is Transforming growth factor beta-1 proprotein (390 aa).

A signal peptide spans 1–29 (MPPSGLRLLPLLLPLLWLLVLTPGRPAAG). The interval 30 to 74 (LSTCKTIDMELVKRKRIEAIRGQILSKLRLASPPSQGEVPPGPLP) is straightjacket domain. Residues 75–271 (EAVLALYNST…ATPLERAQHL (197 aa)) form an arm domain region. N82, N136, and N176 each carry an N-linked (GlcNAc...) asparagine glycan. Residues 226 to 252 (DSRDNTLQVDINGLSSSRRGDLATIHG) are bowtie tail. The Cell attachment site motif lies at 244 to 246 (RGD). Cystine bridges form between C285–C294, C293–C356, C322–C387, and C326–C389.

It belongs to the TGF-beta family. As to quaternary structure, homodimer; disulfide-linked. Interacts with the serine proteases, HTRA1 and HTRA3: the interaction with either inhibits TGFB1-mediated signaling and the HTRA protease activity is required for this inhibition. May interact with THSD4; this interaction may lead to sequestration by FBN1 microfibril assembly and attenuation of TGFB signaling. Interacts with CD109, DPT and ASPN. Interacts with EFEMP2. Interacts with TSKU; the interaction contributes to regulation of the hair cycle. Interacts with TGFBR3. In terms of assembly, homodimer; disulfide-linked. Interacts with transforming growth factor beta-1 (TGF-beta-1) chain; interaction is non-covalent and maintains TGF-beta-1 in a latent state; each latency-associated peptide (LAP) monomer interacts with TGF-beta-1 in the other monomer. Interacts with LTBP1; leading to regulation of TGF-beta-1 activation. Interacts with LRRC32/GARP; leading to regulation of TGF-beta-1 activation on the surface of activated regulatory T-cells (Tregs). Interacts with LRRC33/NRROS; leading to regulation of TGF-beta-1 activation in macrophages and microglia. Interacts (via cell attachment site) with integrins ITGAV and ITGB6 (ITGAV:ITGB6), leading to release of the active TGF-beta-1. Interacts with NREP; the interaction results in a decrease in TGFB1 autoinduction. Interacts with HSP90AB1; inhibits latent TGFB1 activation. Homodimer; disulfide-linked. Interacts with TGF-beta receptors (TGFBR1 and TGFBR2), leading to signal transduction. Transforming growth factor beta-1 proprotein: The precursor proprotein is cleaved in the Golgi apparatus by FURIN to form Transforming growth factor beta-1 (TGF-beta-1) and Latency-associated peptide (LAP) chains, which remain non-covalently linked, rendering TGF-beta-1 inactive. In terms of processing, N-glycosylated. Deglycosylation leads to activation of Transforming growth factor beta-1 (TGF-beta-1); mechanisms triggering deglycosylation-driven activation of TGF-beta-1 are however unclear.

The protein localises to the secreted. It is found in the extracellular space. Its subcellular location is the extracellular matrix. In terms of biological role, transforming growth factor beta-1 proprotein: Precursor of the Latency-associated peptide (LAP) and Transforming growth factor beta-1 (TGF-beta-1) chains, which constitute the regulatory and active subunit of TGF-beta-1, respectively. Functionally, required to maintain the Transforming growth factor beta-1 (TGF-beta-1) chain in a latent state during storage in extracellular matrix. Associates non-covalently with TGF-beta-1 and regulates its activation via interaction with 'milieu molecules', such as LTBP1, LRRC32/GARP and LRRC33/NRROS, that control activation of TGF-beta-1. Interaction with LRRC33/NRROS regulates activation of TGF-beta-1 in macrophages and microglia. Interaction with LRRC32/GARP controls activation of TGF-beta-1 on the surface of activated regulatory T-cells (Tregs). Interaction with integrins (ITGAV:ITGB6 or ITGAV:ITGB8) results in distortion of the Latency-associated peptide chain and subsequent release of the active TGF-beta-1. Its function is as follows. Multifunctional protein that regulates the growth and differentiation of various cell types and is involved in various processes, such as normal development, immune function, microglia function and responses to neurodegeneration. Activation into mature form follows different steps: following cleavage of the proprotein in the Golgi apparatus, Latency-associated peptide (LAP) and Transforming growth factor beta-1 (TGF-beta-1) chains remain non-covalently linked rendering TGF-beta-1 inactive during storage in extracellular matrix. At the same time, LAP chain interacts with 'milieu molecules', such as LTBP1, LRRC32/GARP and LRRC33/NRROS that control activation of TGF-beta-1 and maintain it in a latent state during storage in extracellular milieus. TGF-beta-1 is released from LAP by integrins (ITGAV:ITGB6 or ITGAV:ITGB8): integrin-binding to LAP stabilizes an alternative conformation of the LAP bowtie tail and results in distortion of the LAP chain and subsequent release of the active TGF-beta-1. Once activated following release of LAP, TGF-beta-1 acts by binding to TGF-beta receptors (TGFBR1 and TGFBR2), which transduce signal. While expressed by many cells types, TGF-beta-1 only has a very localized range of action within cell environment thanks to fine regulation of its activation by Latency-associated peptide chain (LAP) and 'milieu molecules'. Plays an important role in bone remodeling: acts as a potent stimulator of osteoblastic bone formation, causing chemotaxis, proliferation and differentiation in committed osteoblasts. Can promote either T-helper 17 cells (Th17) or regulatory T-cells (Treg) lineage differentiation in a concentration-dependent manner. At high concentrations, leads to FOXP3-mediated suppression of RORC and down-regulation of IL-17 expression, favoring Treg cell development. At low concentrations in concert with IL-6 and IL-21, leads to expression of the IL-17 and IL-23 receptors, favoring differentiation to Th17 cells. Stimulates sustained production of collagen through the activation of CREB3L1 by regulated intramembrane proteolysis (RIP). Mediates SMAD2/3 activation by inducing its phosphorylation and subsequent translocation to the nucleus. Positively regulates odontoblastic differentiation in dental papilla cells, via promotion of IPO7-mediated translocation of phosphorylated SMAD2 to the nucleus and subsequent transcription of target genes. Can induce epithelial-to-mesenchymal transition (EMT) and cell migration in various cell types. This is Transforming growth factor beta-1 proprotein (TGFB1) from Mustela putorius furo (European domestic ferret).